The following is a 226-amino-acid chain: Sugar fermentation stimulation protein homolog (226 aa).

The protein belongs to the SfsA family.

The polypeptide is Sugar fermentation stimulation protein homolog (Picrophilus torridus (strain ATCC 700027 / DSM 9790 / JCM 10055 / NBRC 100828 / KAW 2/3)).